The sequence spans 337 residues: Trace amine-associated receptor 5 (337 aa).

Topologically, residues Met1–Tyr38 are extracellular. Asn21 carries N-linked (GlcNAc...) asparagine glycosylation. 2 disulfide bridges follow: Cys24-Cys188 and Cys99-Cys192. Residues Leu39–Val59 form a helical membrane-spanning segment. Residues Ser60–Asn70 lie on the Cytoplasmic side of the membrane. A helical membrane pass occupies residues Phe71–Ser91. Residues Thr92–Leu109 are Extracellular-facing. The chain crosses the membrane as a helical span at residues His110–Ile130. Topologically, residues Asp131–Tyr154 are cytoplasmic. The helical transmembrane segment at Ile155–Val175 threads the bilayer. An extracellular Loop 2 (ECL2) region spans residues Glu176 to Val189. At Glu176–Asn204 the chain is on the extracellular side. Residues Phe205–Val225 traverse the membrane as a helical segment. Topologically, residues Ala226–Thr253 are cytoplasmic. Residues Leu254–Val274 form a helical membrane-spanning segment. The Extracellular segment spans residues Asp275–Pro284. The chain crosses the membrane as a helical span at residues Leu285–Phe307. The Cytoplasmic segment spans residues Ser308–Asp337.

Belongs to the G-protein coupled receptor 1 family.

The protein resides in the cell membrane. Functionally, olfactory receptor specific for trimethylamine, a trace amine enriched in the urine of male rats, playing a role in social behavior. Also activated by N-methylpiperidine. Trimethylamine is present at high concentration in the urine of male after puberty and acts as an attractant. Trimethylamine-binding causes a conformation change that triggers signaling via G(s)-class of G alpha proteins (GNAL or GNAS). Also required to provide olfactory input into limbic brain areas to regulate emotional behaviors likely via modulation of the serotonin system. The chain is Trace amine-associated receptor 5 from Rattus norvegicus (Rat).